Here is a 139-residue protein sequence, read N- to C-terminus: Putative nickel-responsive regulator (139 aa).

Positions 76, 87, 89, and 95 each coordinate Ni(2+).

This sequence belongs to the transcriptional regulatory CopG/NikR family. The cofactor is Ni(2+).

Functionally, transcriptional regulator. This chain is Putative nickel-responsive regulator, found in Rhodopseudomonas palustris (strain HaA2).